The chain runs to 318 residues: Taste receptor type 2 member 7 (318 aa).

Residues 1 to 9 (MADKVQTTL) lie on the Extracellular side of the membrane. The chain crosses the membrane as a helical span at residues 10-30 (LFLAVGEFSVGILGNAFIGLV). At 31-55 (NCMDWVKKRKIASIDLILTSLAISR) the chain is on the cytoplasmic side. The chain crosses the membrane as a helical span at residues 56 to 76 (ICLLCIILLDCFTLVLYPDVY). Residues 77-94 (ATGKEMRIIDFFWTLTNH) lie on the Extracellular side of the membrane. A helical membrane pass occupies residues 95–115 (LSIWFATCLSIYYFFKIGNFF). At 116–128 (HPLFLWMKWRIDR) the chain is on the cytoplasmic side. The chain crosses the membrane as a helical span at residues 129–149 (VISWILLGCVVLSVFISLPAT). At 150–187 (ENLNADFRFCVKAKRKTNLTWSCRVNKTQHASTKLFLN) the chain is on the extracellular side. N-linked (GlcNAc...) asparagine glycans are attached at residues N167 and N175. Residues 188-208 (LATLLPFCVCLMSFFLLILSL) traverse the membrane as a helical segment. Over 209-235 (RRHIRRMQLSATGCRDPSTEAHVRALK) the chain is Cytoplasmic. Residues 236-256 (AVISFLLLFIAYYLSFLIATS) traverse the membrane as a helical segment. The Extracellular segment spans residues 257–266 (SYFMPETELA). A helical transmembrane segment spans residues 267–287 (VIFGESIALIYPSSHSFILIL). Residues 288–318 (GNNKLRYVSLKVIWKVMSILKGRKFQQHKQI) are Cytoplasmic-facing.

This sequence belongs to the G-protein coupled receptor T2R family.

The protein resides in the membrane. Gustducin-coupled receptor implicated in the perception of bitter compounds in the oral cavity and the gastrointestinal tract. Signals through PLCB2 and the calcium-regulated cation channel TRPM5. This Gorilla gorilla gorilla (Western lowland gorilla) protein is Taste receptor type 2 member 7 (TAS2R7).